The chain runs to 228 residues: Thymidylate kinase (228 aa).

20–27 (GGEGSGKS) provides a ligand contact to ATP.

Belongs to the thymidylate kinase family.

The catalysed reaction is dTMP + ATP = dTDP + ADP. Phosphorylation of dTMP to form dTDP in both de novo and salvage pathways of dTTP synthesis. The polypeptide is Thymidylate kinase (Afipia carboxidovorans (strain ATCC 49405 / DSM 1227 / KCTC 32145 / OM5) (Oligotropha carboxidovorans)).